We begin with the raw amino-acid sequence, 86 residues long: RNA-binding protein Hfq (86 aa).

A Sm domain is found at 9-68; the sequence is DPYLNVLRKERIPVSIYLVNGIKLQGQVESFDQFVVLLKNTVSQMVYKHAISTVVPSRPV.

Belongs to the Hfq family. As to quaternary structure, homohexamer.

Its function is as follows. RNA chaperone that binds small regulatory RNA (sRNAs) and mRNAs to facilitate mRNA translational regulation in response to envelope stress, environmental stress and changes in metabolite concentrations. Also binds with high specificity to tRNAs. This Saccharophagus degradans (strain 2-40 / ATCC 43961 / DSM 17024) protein is RNA-binding protein Hfq.